Reading from the N-terminus, the 82-residue chain is MAMRLAAAAAFVRRLVPARNPVISAEAEAVTCGRGDKKTKRGKRFKGSYGNARPKREKKIERIKDRVEVPRSTPWPLPFKLI.

Residues 1 to 22 (MAMRLAAAAAFVRRLVPARNPV) constitute a mitochondrion transit peptide. Residues 34–56 (RGDKKTKRGKRFKGSYGNARPKR) form a disordered region. Residues 37-46 (KKTKRGKRFK) are compositionally biased toward basic residues.

Belongs to the bacterial ribosomal protein bTHX family.

It is found in the mitochondrion. In Oryza sativa subsp. japonica (Rice), this protein is Small ribosomal subunit protein bTHXm.